Reading from the N-terminus, the 559-residue chain is PHD finger protein 1 (559 aa).

The region spanning 29 to 86 (PRLWEGQDVLARWTDGLLYLGTIKKVDSAREVCLVQFEDDSQFLVLWKDISPAALPGE) is the Tudor domain. 2 consecutive PHD-type zinc fingers follow at residues 87 to 142 (ELLC…CVFA) and 186 to 240 (QSYC…CRGG). Disordered regions lie at residues 338-434 (PVEL…TDAR) and 448-526 (HPSA…GGVS). Over residues 369-386 (WRSEPEPLRRRQKGKVEE) the composition is skewed to basic and acidic residues. 2 stretches are compositionally biased toward polar residues: residues 417–426 (NQSYEGSSGY) and 449–459 (PSASTAGTSGD). A compositionally biased stretch (low complexity) spans 481–515 (SSPHSVTASSSSVPALTPGFSRHSPPSPLCRSLSP).

Belongs to the Polycomblike family. As to quaternary structure, associated component of the PRC2 complex. Interacts with p53/TP53. Interacts with CHMP1. As to expression, testis-specific.

Its subcellular location is the nucleus. It is found in the cytoplasm. The protein resides in the cytoskeleton. The protein localises to the microtubule organizing center. It localises to the centrosome. Its function is as follows. Polycomb group (PcG) that specifically binds histone H3 trimethylated at 'Lys-36' (H3K36me3) and recruits the PRC2 complex. Involved in DNA damage response and is recruited at double-strand breaks (DSBs). Acts by binding to H3K36me3, a mark for transcriptional activation, and recruiting the PRC2 complex: it is however unclear whether recruitment of the PRC2 complex to H3K36me3 leads to enhance or inhibit H3K27me3 methylation mediated by the PRC2 complex. According to some reports, PRC2 recruitment by PHF1 promotes H3K27me3 and subsequent gene silencing by inducing spreading of PRC2 and H3K27me3 into H3K36me3 loci. According to other reports, PHF1 recruits the PRC2 complex at double-strand breaks (DSBs) and inhibits the activity of PRC2. Regulates p53/TP53 stability and prolonges its turnover: may act by specifically binding to a methylated from of p53/TP53. The sequence is that of PHD finger protein 1 (Phf1) from Mus musculus (Mouse).